Reading from the N-terminus, the 73-residue chain is MTNSLFKQKLSPIKPGDPIDYKDVELLKKFITDRGKILPRRLTGLTAKQQRDLTTAVKRARIIALLPFVNPEG.

This sequence belongs to the bacterial ribosomal protein bS18 family. In terms of assembly, part of the 30S ribosomal subunit. Forms a tight heterodimer with protein bS6.

Functionally, binds as a heterodimer with protein bS6 to the central domain of the 16S rRNA, where it helps stabilize the platform of the 30S subunit. This Prochlorococcus marinus (strain NATL2A) protein is Small ribosomal subunit protein bS18.